The following is a 200-amino-acid chain: MEGASEFFFLFSFISHAMMLTGLIGSSSFLEGDGGFFTHSGDDGNHQVLTFIKSSLQTVTQFTFWSLDIILSVTVHVHQRQETVINVQQLVFVSLDNWNFHVVSRWRQIFQLLTSEDINGNQMDFSVTVLTSLRSGHVDNLTWSTLDDNETVLSQGRTLHWVGGGGTSVSSFKGMFFVRHCIYELVFVCVWESMSNWLQK.

A helical membrane pass occupies residues 7–29 (FFFLFSFISHAMMLTGLIGSSSF).

It is found in the membrane. This is an uncharacterized protein from Saccharomyces cerevisiae (strain ATCC 204508 / S288c) (Baker's yeast).